The primary structure comprises 179 residues: UPF0302 protein EF_1554 (179 aa).

It belongs to the UPF0302 family.

The chain is UPF0302 protein EF_1554 from Enterococcus faecalis (strain ATCC 700802 / V583).